The primary structure comprises 80 residues: Exodeoxyribonuclease 7 small subunit (80 aa).

This sequence belongs to the XseB family. In terms of assembly, heterooligomer composed of large and small subunits.

It is found in the cytoplasm. The catalysed reaction is Exonucleolytic cleavage in either 5'- to 3'- or 3'- to 5'-direction to yield nucleoside 5'-phosphates.. Functionally, bidirectionally degrades single-stranded DNA into large acid-insoluble oligonucleotides, which are then degraded further into small acid-soluble oligonucleotides. The protein is Exodeoxyribonuclease 7 small subunit of Cronobacter sakazakii (strain ATCC BAA-894) (Enterobacter sakazakii).